Consider the following 1380-residue polypeptide: DNA-directed RNA polymerase subunit beta (1380 aa).

Belongs to the RNA polymerase beta chain family. In terms of assembly, the RNAP catalytic core consists of 2 alpha, 1 beta, 1 beta' and 1 omega subunit. When a sigma factor is associated with the core the holoenzyme is formed, which can initiate transcription.

It catalyses the reaction RNA(n) + a ribonucleoside 5'-triphosphate = RNA(n+1) + diphosphate. DNA-dependent RNA polymerase catalyzes the transcription of DNA into RNA using the four ribonucleoside triphosphates as substrates. In Ehrlichia ruminantium (strain Gardel), this protein is DNA-directed RNA polymerase subunit beta.